A 51-amino-acid polypeptide reads, in one-letter code: Large ribosomal subunit protein bL33 (51 aa).

This sequence belongs to the bacterial ribosomal protein bL33 family.

The sequence is that of Large ribosomal subunit protein bL33 from Pseudomonas putida (strain ATCC 47054 / DSM 6125 / CFBP 8728 / NCIMB 11950 / KT2440).